Reading from the N-terminus, the 270-residue chain is Phosphatidylinositol transfer protein alpha isoform (270 aa).

Positions 58, 60, 85, 89, 96, and 194 each coordinate a 1,2-diacyl-sn-glycero-3-phospho-(1D-myo-inositol). Position 215 is an N6-acetyllysine (lysine 215).

This sequence belongs to the PtdIns transfer protein family. PI transfer class I subfamily. Phosphorylated by PKC in a calcium and phosphatidylserine-dependent manner.

The protein resides in the cytoplasm. Its subcellular location is the nucleus. It carries out the reaction a 1,2-diacyl-sn-glycero-3-phosphocholine(in) = a 1,2-diacyl-sn-glycero-3-phosphocholine(out). The enzyme catalyses a 1,2-diacyl-sn-glycero-3-phospho-(1D-myo-inositol)(in) = a 1,2-diacyl-sn-glycero-3-phospho-(1D-myo-inositol)(out). In terms of biological role, catalyzes the transfer of phosphatidylinositol (PI) and phosphatidylcholine (PC) between membranes. Shows a preference for PI and PC containing shorter saturated or monosaturated acyl chains at the sn-1 and sn-2 positions. Preference order for PC is C16:1 &gt; C16:0 &gt; C18:1 &gt; C18:0 &gt; C20:4 and for PI is C16:1 &gt; C16:0 &gt; C18:1 &gt; C18:0 &gt; C20:4 &gt; C20:3. The protein is Phosphatidylinositol transfer protein alpha isoform (PITPNA) of Bos taurus (Bovine).